We begin with the raw amino-acid sequence, 93 residues long: MKLFLVLIILLFEVLTDGARLKKCFNNVTGYCRKKCKVGERYEIGCLSGKLCCINYEEEKEHVSFKKPHQHSGEKLSVQQDYIILPTVTIFTV.

An N-terminal signal peptide occupies residues 1 to 18; the sequence is MKLFLVLIILLFEVLTDG. Intrachain disulfides connect C24–C52, C32–C46, and C36–C53.

Belongs to the beta-defensin family.

It localises to the secreted. Has antibacterial activity. This is Beta-defensin 128 (DEFB128) from Pongo pygmaeus (Bornean orangutan).